Reading from the N-terminus, the 673-residue chain is Pesticin receptor (673 aa).

The signal sequence occupies residues 1–22 (MKMTRLYPLALGGLLLPAIANA). The short motif at 30–37 (STLEVTAS) is the TonB box element. The TBDR plug domain maps to 41–155 (SRSASANNVS…QGGIINIVTQ (115 aa)). The TBDR beta-barrel domain occupies 160 to 672 (TPRGYIEGGV…TVGINTRIDF (513 aa)). The TonB C-terminal box signature appears at 657-673 (QVNMGRTVGINTRIDFF).

The protein belongs to the TonB-dependent receptor family.

The protein resides in the cell outer membrane. Functionally, receptor for the bacteriocin pesticin and for the siderophore yersiniabactin. The protein is Pesticin receptor (fyuA) of Yersinia enterocolitica.